We begin with the raw amino-acid sequence, 499 residues long: MFENQLEIQRIQKADELRNLGVNPYPHFLKKDMNIKEFREKFAYIAENETKKADEEIVISGRIKLKRVAGRSTFANIEDESGNVQIYYSKDSIGEENYLKFKKNIEVGDIILVKGYAFLTGTGEFSIHVSDLILASKAISILPEKFHGLADKELRYRQRYLDMIMDPSVRVDFEKRSLIVRTIRRFFEDRGFLEVETPMMHQIAGGANAKPFITHHNALDIDRYLKIAPELYLKRLVVGGMNSVFEMNRCFRNEGMDLTHNPEFTSIEFYWAWHNYFEAMDLTEELFNELLKTLNLGEILDYGNLKIDFSKKFQRIKYLDALVLIGEISPEIIKDKDEILKKLKSDGFEANEKLDLGHLQAELFDNYVESKLINPTFITDFPVSISPLSRRSDKDPEIAERFELYIAGKELANAFNELNDPLDQYERFKAQIEAKKAGDDEAHEMDEDYVRALSYAMPPTVGWGLGVDRLVMILLNKASIRDVILFPAMKPIKNLDDKE.

Mg(2+)-binding residues include Glu-403 and Glu-410.

This sequence belongs to the class-II aminoacyl-tRNA synthetase family. As to quaternary structure, homodimer. Mg(2+) is required as a cofactor.

Its subcellular location is the cytoplasm. The catalysed reaction is tRNA(Lys) + L-lysine + ATP = L-lysyl-tRNA(Lys) + AMP + diphosphate. The polypeptide is Lysine--tRNA ligase (Campylobacter hominis (strain ATCC BAA-381 / DSM 21671 / CCUG 45161 / LMG 19568 / NCTC 13146 / CH001A)).